A 382-amino-acid polypeptide reads, in one-letter code: F-box protein At3g19470 (382 aa).

An F-box domain is found at 1–44 (MYNLPRDLPEEVLCRIPLTSLRPVRSTCKKWSTLSKCGSFAKKH).

The polypeptide is F-box protein At3g19470 (Arabidopsis thaliana (Mouse-ear cress)).